We begin with the raw amino-acid sequence, 754 residues long: 1,4-alpha-glucan branching enzyme GlgB (754 aa).

D431 serves as the catalytic Nucleophile. The active-site Proton donor is E484.

Belongs to the glycosyl hydrolase 13 family. GlgB subfamily. Monomer.

It carries out the reaction Transfers a segment of a (1-&gt;4)-alpha-D-glucan chain to a primary hydroxy group in a similar glucan chain.. It participates in glycan biosynthesis; glycogen biosynthesis. Catalyzes the formation of the alpha-1,6-glucosidic linkages in glycogen by scission of a 1,4-alpha-linked oligosaccharide from growing alpha-1,4-glucan chains and the subsequent attachment of the oligosaccharide to the alpha-1,6 position. The polypeptide is 1,4-alpha-glucan branching enzyme GlgB (Prochlorococcus marinus (strain AS9601)).